A 286-amino-acid chain; its full sequence is Bifunctional protein FolD (286 aa).

Residues 164–166 (GTS) and Ile-230 contribute to the NADP(+) site.

This sequence belongs to the tetrahydrofolate dehydrogenase/cyclohydrolase family. As to quaternary structure, homodimer.

It carries out the reaction (6R)-5,10-methylene-5,6,7,8-tetrahydrofolate + NADP(+) = (6R)-5,10-methenyltetrahydrofolate + NADPH. The enzyme catalyses (6R)-5,10-methenyltetrahydrofolate + H2O = (6R)-10-formyltetrahydrofolate + H(+). The protein operates within one-carbon metabolism; tetrahydrofolate interconversion. Functionally, catalyzes the oxidation of 5,10-methylenetetrahydrofolate to 5,10-methenyltetrahydrofolate and then the hydrolysis of 5,10-methenyltetrahydrofolate to 10-formyltetrahydrofolate. This chain is Bifunctional protein FolD, found in Mesoplasma florum (strain ATCC 33453 / NBRC 100688 / NCTC 11704 / L1) (Acholeplasma florum).